Reading from the N-terminus, the 84-residue chain is Large ribosomal subunit protein eL34 (84 aa).

Belongs to the eukaryotic ribosomal protein eL34 family.

In Pyrobaculum aerophilum (strain ATCC 51768 / DSM 7523 / JCM 9630 / CIP 104966 / NBRC 100827 / IM2), this protein is Large ribosomal subunit protein eL34 (ribL34e).